Reading from the N-terminus, the 253-residue chain is Imidazole glycerol phosphate synthase subunit HisF (253 aa).

Catalysis depends on residues Asp-11 and Asp-130.

This sequence belongs to the HisA/HisF family. Heterodimer of HisH and HisF.

It localises to the cytoplasm. The enzyme catalyses 5-[(5-phospho-1-deoxy-D-ribulos-1-ylimino)methylamino]-1-(5-phospho-beta-D-ribosyl)imidazole-4-carboxamide + L-glutamine = D-erythro-1-(imidazol-4-yl)glycerol 3-phosphate + 5-amino-1-(5-phospho-beta-D-ribosyl)imidazole-4-carboxamide + L-glutamate + H(+). It participates in amino-acid biosynthesis; L-histidine biosynthesis; L-histidine from 5-phospho-alpha-D-ribose 1-diphosphate: step 5/9. Its function is as follows. IGPS catalyzes the conversion of PRFAR and glutamine to IGP, AICAR and glutamate. The HisF subunit catalyzes the cyclization activity that produces IGP and AICAR from PRFAR using the ammonia provided by the HisH subunit. The polypeptide is Imidazole glycerol phosphate synthase subunit HisF (Methylibium petroleiphilum (strain ATCC BAA-1232 / LMG 22953 / PM1)).